The sequence spans 433 residues: MAATAHGLCEFIDASPSPFHVCATVAGRLLGAGYRELREADRWPDKPGRYFTVRAGSLVAWNAEQSGHTQVPFRIVGAHTDSPNLRVKQHPDRLVAGWHVVALQPYGGVWLHSWLDRDLGISGRLSVRDGTGVSHRLVRIDDPILRVPQLAIHLAEDRKSLTLDPQRHINAVWGVGERVESFVGYVAQRAGVAAADVLAADLMTHDLTPSALIGASVNGTASLLSAPRLDNQASCYAGMEALLAVDVDSASSGFVPVLAIFDHEEVGSASGHGAQSDLLSSVLERIVLAAGGTREDFLRRLTTSMLASADMAHATHPNYPDRHEPSHPIEVNAGPVLKVHPNLRYATDGRTAAAFALACQRAGVPMQRYEHRADLPCGSTIGPLAAARTGIPTVDVGAAQLAMHSARELMGAHDVAAYSAALQAFLSAELSEA.

Residues His79, His153, and His404 each contribute to the Zn(2+) site.

The protein belongs to the peptidase M18 family. Requires Zn(2+) as cofactor.

In Mycobacterium bovis (strain ATCC BAA-935 / AF2122/97), this protein is Probable M18 family aminopeptidase 2 (apeB).